Consider the following 464-residue polypeptide: Arginine biosynthesis bifunctional protein ArgJ, mitochondrial (464 aa).

Positions 191, 220, 231, 318, 459, and 464 each coordinate substrate. Threonine 231 acts as the Nucleophile in catalysis.

It belongs to the ArgJ family. In terms of assembly, heterodimer of an alpha and a beta chain. The alpha and beta chains are autoproteolytically processed from a single precursor protein within the mitochondrion.

The protein localises to the mitochondrion matrix. It catalyses the reaction N(2)-acetyl-L-ornithine + L-glutamate = N-acetyl-L-glutamate + L-ornithine. The enzyme catalyses L-glutamate + acetyl-CoA = N-acetyl-L-glutamate + CoA + H(+). It participates in amino-acid biosynthesis; L-arginine biosynthesis; L-ornithine and N-acetyl-L-glutamate from L-glutamate and N(2)-acetyl-L-ornithine (cyclic): step 1/1. It functions in the pathway amino-acid biosynthesis; L-arginine biosynthesis; N(2)-acetyl-L-ornithine from L-glutamate: step 1/4. Functionally, catalyzes two activities which are involved in the cyclic version of arginine biosynthesis: the synthesis of acetylglutamate from glutamate and acetyl-CoA, and of ornithine by transacetylation between acetylornithine and glutamate. This Pyricularia oryzae (strain 70-15 / ATCC MYA-4617 / FGSC 8958) (Rice blast fungus) protein is Arginine biosynthesis bifunctional protein ArgJ, mitochondrial.